The chain runs to 317 residues: Transmembrane and death domain protein 1 (317 aa).

A signal peptide spans 1–27; that stretch reads MAARTLASALVLTLWVWALAPAGAVDA. Residues 28 to 218 lie on the Extracellular side of the membrane; it reads MGPHAAVRLA…ERSPMGWAGP (191 aa). Positions 62–73 are enriched in basic and acidic residues; the sequence is ELSRLSEDRLAR. The tract at residues 62–106 is disordered; sequence ELSRLSEDRLARPEPLNTTSGSPSRRRRREAAEDPAGRVAGPGEV. In terms of domain architecture, Death spans 66–150; it reads LSEDRLARPE…DVARELGKNL (85 aa). Asn-78 is a glycosylation site (N-linked (GlcNAc...) asparagine). A helical transmembrane segment spans residues 219–239; it reads LALGLLTGFVGALGTGALVVL. Residues 240–317 lie on the Cytoplasmic side of the membrane; the sequence is LTLWITGGDG…SWGSGALDGL (78 aa).

Its subcellular location is the membrane. The polypeptide is Transmembrane and death domain protein 1 (Homo sapiens (Human)).